Consider the following 722-residue polypeptide: Zinc finger BED domain-containing protein RICESLEEPER 1 (722 aa).

The BED-type zinc-finger motif lies at 66 to 126; sequence RKKSLVWEHF…GSCPKIKNQE (61 aa). Cys89, Cys92, His113, and Cys119 together coordinate Zn(2+). A disordered region spans residues 572–592; the sequence is VEQGGGNNAPASENSTQATAP. Positions 580 to 592 are enriched in polar residues; the sequence is APASENSTQATAP. Positions 617–702 are HATC (Hobo-Ac-Tam3) domain; the sequence is ELEQYLDESL…EALVCAKDWL (86 aa).

Homodimer.

It localises to the nucleus. Its function is as follows. Transposase-like protein that is essential for plant growth and development. May regulate global gene expression by recruiting other cellular factors. This is Zinc finger BED domain-containing protein RICESLEEPER 1 from Oryza sativa subsp. japonica (Rice).